We begin with the raw amino-acid sequence, 32 residues long: Cyclotide Hyfl-C (32 aa).

A cross-link (cyclopeptide (Gly-Asn)) is located at residues 1 to 32 (GSPRQCAETCFIGKCYTEELGCTCTAFLCMKN). 3 disulfides stabilise this stretch: Cys6/Cys22, Cys10/Cys24, and Cys15/Cys29.

The protein belongs to the cyclotide family. Moebius subfamily. Post-translationally, this is a cyclic peptide.

Probably participates in a plant defense mechanism. The sequence is that of Cyclotide Hyfl-C from Hybanthus floribundus (Greenviolet).